We begin with the raw amino-acid sequence, 267 residues long: 4-hydroxy-tetrahydrodipicolinate reductase (267 aa).

An NAD(+)-binding site is contributed by 8 to 13; sequence GASGRM. Residue Arg35 participates in NADP(+) binding. Residues 98-100 and 122-125 contribute to the NAD(+) site; these read GTT and APNM. Residue His155 is the Proton donor/acceptor of the active site. A (S)-2,3,4,5-tetrahydrodipicolinate-binding site is contributed by His156. The Proton donor role is filled by Lys159. 165–166 lines the (S)-2,3,4,5-tetrahydrodipicolinate pocket; it reads GT.

Belongs to the DapB family.

The protein resides in the cytoplasm. It carries out the reaction (S)-2,3,4,5-tetrahydrodipicolinate + NAD(+) + H2O = (2S,4S)-4-hydroxy-2,3,4,5-tetrahydrodipicolinate + NADH + H(+). The catalysed reaction is (S)-2,3,4,5-tetrahydrodipicolinate + NADP(+) + H2O = (2S,4S)-4-hydroxy-2,3,4,5-tetrahydrodipicolinate + NADPH + H(+). It participates in amino-acid biosynthesis; L-lysine biosynthesis via DAP pathway; (S)-tetrahydrodipicolinate from L-aspartate: step 4/4. In terms of biological role, catalyzes the conversion of 4-hydroxy-tetrahydrodipicolinate (HTPA) to tetrahydrodipicolinate. The protein is 4-hydroxy-tetrahydrodipicolinate reductase of Hahella chejuensis (strain KCTC 2396).